The sequence spans 541 residues: Membrane protein insertase YidC (541 aa).

The next 5 membrane-spanning stretches (helical) occupy residues 6 to 26 (FFLIIAIFLSIFLLWDKWEIT), 356 to 376 (IIHSWGYSIIILTLLIKLAFY), 430 to 450 (LPILVQIPVFISLYWVLLEMV), 463 to 483 (LSAPDPYYILPLIMGISMFIQ), and 498 to 518 (IMMALPFVFTIFFLWFPSGLV).

The protein belongs to the OXA1/ALB3/YidC family. Type 1 subfamily. As to quaternary structure, interacts with the Sec translocase complex via SecD. Specifically interacts with transmembrane segments of nascent integral membrane proteins during membrane integration.

The protein localises to the cell inner membrane. In terms of biological role, required for the insertion and/or proper folding and/or complex formation of integral membrane proteins into the membrane. Involved in integration of membrane proteins that insert both dependently and independently of the Sec translocase complex, as well as at least some lipoproteins. Aids folding of multispanning membrane proteins. The sequence is that of Membrane protein insertase YidC from Vesicomyosocius okutanii subsp. Calyptogena okutanii (strain HA).